We begin with the raw amino-acid sequence, 303 residues long: Siderophore enterobactin esterase (303 aa).

The protein belongs to the esterase D family. In terms of assembly, homodimer.

The enzyme catalyses enterobactin + 3 H2O = 3 N-(2,3-dihydroxybenzoyl)-L-serine + 2 H(+). In terms of biological role, displays specific enterobactin (ENB) esterase activity required for intracellular release of iron. Enterobactin is a xenosiderophore that is selectively produced by Gram-negative Enterobacteriaceae. The affinity for enterobactin is quite high, potentially due to the low natural abundance of this xenosiderophore in fungal habitats. Does not hydrolyze triacetylfusarinine C (TAFC). The protein is Siderophore enterobactin esterase of Emericella nidulans (strain FGSC A4 / ATCC 38163 / CBS 112.46 / NRRL 194 / M139) (Aspergillus nidulans).